The primary structure comprises 843 residues: Protein P (843 aa).

Residues 1 to 177 (MPLSYQHFRK…FCGSPYSWEQ (177 aa)) form a terminal protein domain (TP) region. A spacer region spans residues 178–346 (DLQHGRLVIQ…YCLCHIVNLI (169 aa)). Disordered regions lie at residues 219 to 258 (RKSRLGPQPTQGQLAGRPQGGSGSIRARVHPSPWGTVGVE) and 297 to 316 (SSGHAVELHHFPPNSSRSQS). Residues 347 to 690 (DDWGPCAEHG…YLNLYPVARQ (344 aa)) are polymerase/reverse transcriptase domain (RT). The Reverse transcriptase domain occupies 357–600 (EHRIRTPRTP…YSLNFMGYVI (244 aa)). Positions 429, 551, and 552 each coordinate Mg(2+).

This sequence belongs to the hepadnaviridae P protein family.

The enzyme catalyses DNA(n) + a 2'-deoxyribonucleoside 5'-triphosphate = DNA(n+1) + diphosphate. It carries out the reaction Endonucleolytic cleavage to 5'-phosphomonoester.. With respect to regulation, activated by host HSP70 and HSP40 in vitro to be able to bind the epsilon loop of the pgRNA. Because deletion of the RNase H region renders the protein partly chaperone-independent, the chaperones may be needed indirectly to relieve occlusion of the RNA-binding site by this domain. Inhibited by several reverse-transcriptase inhibitors: Lamivudine, Adefovir and Entecavir. Multifunctional enzyme that converts the viral RNA genome into dsDNA in viral cytoplasmic capsids. This enzyme displays a DNA polymerase activity that can copy either DNA or RNA templates, and a ribonuclease H (RNase H) activity that cleaves the RNA strand of RNA-DNA heteroduplexes in a partially processive 3'- to 5'-endonucleasic mode. Neo-synthesized pregenomic RNA (pgRNA) are encapsidated together with the P protein, and reverse-transcribed inside the nucleocapsid. Initiation of reverse-transcription occurs first by binding the epsilon loop on the pgRNA genome, and is initiated by protein priming, thereby the 5'-end of (-)DNA is covalently linked to P protein. Partial (+)DNA is synthesized from the (-)DNA template and generates the relaxed circular DNA (RC-DNA) genome. After budding and infection, the RC-DNA migrates in the nucleus, and is converted into a plasmid-like covalently closed circular DNA (cccDNA). The activity of P protein does not seem to be necessary for cccDNA generation, and is presumably released from (+)DNA by host nuclear DNA repair machinery. The polypeptide is Protein P (Hepatitis B virus genotype B1 (isolate Japan/Ry30/2002) (HBV-B)).